We begin with the raw amino-acid sequence, 338 residues long: Trace amine-associated receptor 1 (338 aa).

Over 1-24 (MPFCHNIINISCVKNNWSNDVRAS) the chain is Extracellular. 3 disulfide bridges follow: cysteine 4–cysteine 177, cysteine 12–cysteine 87, and cysteine 95–cysteine 181. N-linked (GlcNAc...) asparagine glycosylation is found at asparagine 9 and asparagine 16. The helical transmembrane segment at 25 to 45 (LYSLMALIILTTLVGNLIVIV) threads the bilayer. The Cytoplasmic segment spans residues 46 to 58 (SISHFKQLHTPTN). The chain crosses the membrane as a helical span at residues 59-79 (WLIHSMATVDFLLGCLVMPYS). Over 80–97 (MVRSAEHCWYFGEVFCKI) the chain is Extracellular. A helical transmembrane segment spans residues 98–118 (HTSTDIMLSSASIFHLSFISI). 2-phenylethylamine is bound at residue aspartate 102. The Cytoplasmic segment spans residues 119 to 135 (DRYYAVCDPLRYKAKIN). The chain crosses the membrane as a helical span at residues 136–156 (ILVVCVMIFISWSVPAVFAFG). Residues 157–187 (MIFLELNFKGAEEIYYKHVHCRGGCSVFFSK) are Extracellular-facing. The chain crosses the membrane as a helical span at residues 188 to 208 (ISGVLAFMTSFYIPGSIMLCI). The Cytoplasmic segment spans residues 209 to 251 (YYRIYLIAKEQARSINDANQKLQIGLEMKNGISQSKERKAVKT). A helical transmembrane segment spans residues 252–272 (LGIVMGVFLICWCPFFVCTVI). The Extracellular segment spans residues 273-286 (DPFLHYTIPPTLND). A helical membrane pass occupies residues 287–307 (VLIWFGYLNSTFNPMVYAFFY). Residues 308 to 338 (PWFRKALKMILFGKIFQKDSSRCKLFLESSS) lie on the Cytoplasmic side of the membrane.

This sequence belongs to the G-protein coupled receptor 1 family.

It is found in the endomembrane system. The protein localises to the endoplasmic reticulum membrane. It localises to the cell membrane. Its function is as follows. Intracellular G-protein coupled receptor for trace amines, which recognizes endogenous amine-containing metabolites such as beta-phenylethylamine (beta-PEA), 3-iodothyronamine (T1AM), isoamylamine (IAA), cadaverine (CAD), cyclohexylamine (CHA), p-tyramine (p-TYR), trimethylamine (TMA), octopamine and tryptamine. Also functions as a receptor for various drugs and psychoactive substances, such as amphetamine and methamphetamine. Unresponsive to classical biogenic amines, such as epinephrine and histamine and only partially activated by dopamine and serotonin. Expressed in both the central and peripheral nervous system: TAAR1 activation regulates the activity of several neurotransmitter signaling pathways by (1) decreasing the basal firing rates of the neurons involved and by (2) lowering the sensitivity of receptors to neurotransmitters. Ligand binding causes a conformation change that triggers signaling via guanine nucleotide-binding proteins (G proteins) and modulates the activity of downstream effectors. TAAR1 is coupled with different G(i)/G(o)-, G(s)- or G(q)/G(11) classes of G alpha proteins depending on the ligand. CAD-binding is coupled to G(i)/G(o) G alpha proteins and mediates inhibition of adenylate cyclase activity. T1AM- or beta-PEA-binding is coupled to G(s) G alpha proteins and mediates activation of adenylate cyclase activity. CHA- or IAA-binding is coupled to G(q)/G(11) G alpha proteins and activates phospholipase C-beta, releasing diacylglycerol (DAG) and inositol 1,4,5-trisphosphate (IP3) second messengers. TMA-binding is coupled with all three G(i)/G(o)-, G(s)- or G(q)/G(11) G alpha protein subtypes. The sequence is that of Trace amine-associated receptor 1 (TAAR1) from Macaca mulatta (Rhesus macaque).